Here is a 462-residue protein sequence, read N- to C-terminus: tRNA modification GTPase MnmE (462 aa).

(6S)-5-formyl-5,6,7,8-tetrahydrofolate is bound by residues Arg-23, Glu-86, and Lys-125. Residues 221–384 (GIPVAIVGEP…LKNQLLSFVN (164 aa)) form the TrmE-type G domain. K(+) is bound at residue Asn-231. Residues 231-236 (NVGKST), 250-256 (SEIAGTT), and 275-278 (DTAG) contribute to the GTP site. Ser-235 is a Mg(2+) binding site. K(+) is bound by residues Ser-250, Ile-252, and Thr-255. Thr-256 provides a ligand contact to Mg(2+). A (6S)-5-formyl-5,6,7,8-tetrahydrofolate-binding site is contributed by Lys-462.

Belongs to the TRAFAC class TrmE-Era-EngA-EngB-Septin-like GTPase superfamily. TrmE GTPase family. As to quaternary structure, homodimer. Heterotetramer of two MnmE and two MnmG subunits. Requires K(+) as cofactor.

The protein resides in the cytoplasm. Functionally, exhibits a very high intrinsic GTPase hydrolysis rate. Involved in the addition of a carboxymethylaminomethyl (cmnm) group at the wobble position (U34) of certain tRNAs, forming tRNA-cmnm(5)s(2)U34. The sequence is that of tRNA modification GTPase MnmE from Flavobacterium psychrophilum (strain ATCC 49511 / DSM 21280 / CIP 103535 / JIP02/86).